Here is a 231-residue protein sequence, read N- to C-terminus: Urease accessory protein UreE (231 aa).

The segment at 185–231 (VASPLDEPHGSGLHIHGIHSHGEGHSHGDHDHDHSHSHGDHDHDHKH) is disordered. The span at 204–231 (SHGEGHSHGDHDHDHSHSHGDHDHDHKH) shows a compositional bias: basic and acidic residues.

It belongs to the UreE family.

The protein resides in the cytoplasm. Functionally, involved in urease metallocenter assembly. Binds nickel. Probably functions as a nickel donor during metallocenter assembly. The protein is Urease accessory protein UreE of Yersinia pseudotuberculosis serotype O:1b (strain IP 31758).